The primary structure comprises 116 residues: Large ribosomal subunit protein uL22 (116 aa).

Belongs to the universal ribosomal protein uL22 family. As to quaternary structure, part of the 50S ribosomal subunit.

Its function is as follows. This protein binds specifically to 23S rRNA; its binding is stimulated by other ribosomal proteins, e.g. L4, L17, and L20. It is important during the early stages of 50S assembly. It makes multiple contacts with different domains of the 23S rRNA in the assembled 50S subunit and ribosome. Functionally, the globular domain of the protein is located near the polypeptide exit tunnel on the outside of the subunit, while an extended beta-hairpin is found that lines the wall of the exit tunnel in the center of the 70S ribosome. This chain is Large ribosomal subunit protein uL22, found in Sulfurihydrogenibium sp. (strain YO3AOP1).